The following is a 464-amino-acid chain: tRNA-2-methylthio-N(6)-dimethylallyladenosine synthase (464 aa).

One can recognise an MTTase N-terminal domain in the interval 19–135 (GSYWITTFGC…LENLLERVDL (117 aa)). [4Fe-4S] cluster-binding residues include Cys28, Cys64, Cys98, Cys170, Cys174, and Cys177. A Radical SAM core domain is found at 156 to 393 (RDSSICGWVN…NELVETTSRK (238 aa)). The TRAM domain maps to 396 to 464 (QRYLNNIESV…SFSLSGQIYK (69 aa)).

Belongs to the methylthiotransferase family. MiaB subfamily. Monomer. It depends on [4Fe-4S] cluster as a cofactor.

Its subcellular location is the cytoplasm. It carries out the reaction N(6)-dimethylallyladenosine(37) in tRNA + (sulfur carrier)-SH + AH2 + 2 S-adenosyl-L-methionine = 2-methylsulfanyl-N(6)-dimethylallyladenosine(37) in tRNA + (sulfur carrier)-H + 5'-deoxyadenosine + L-methionine + A + S-adenosyl-L-homocysteine + 2 H(+). Its function is as follows. Catalyzes the methylthiolation of N6-(dimethylallyl)adenosine (i(6)A), leading to the formation of 2-methylthio-N6-(dimethylallyl)adenosine (ms(2)i(6)A) at position 37 in tRNAs that read codons beginning with uridine. The polypeptide is tRNA-2-methylthio-N(6)-dimethylallyladenosine synthase (Prochlorococcus marinus subsp. pastoris (strain CCMP1986 / NIES-2087 / MED4)).